The sequence spans 115 residues: U17-barytoxin-Tl1c (115 aa).

A signal peptide spans 1-20; the sequence is MKTIIVFLSLLVLATKFGDA. A propeptide spanning residues 21–74 is cleaved from the precursor; sequence KEGVNQKQKKEVTQNEFREEYLNEMAAMSLVQQLEAIERALFENEAGRNSRQKR. 3 cysteine pairs are disulfide-bonded: C75–C89, C82–C94, and C88–C109.

This sequence belongs to the neurotoxin 14 (magi-1) family. 03 (ICK-30-40) subfamily. As to expression, expressed by the venom gland.

The protein localises to the secreted. Ion channel inhibitor. The sequence is that of U17-barytoxin-Tl1c from Trittame loki (Brush-footed trapdoor spider).